The sequence spans 515 residues: Sodium/hydrogen exchanger 9B1 (515 aa).

The segment covering 1-10 has biased composition (basic and acidic residues); sequence MHTTESKNEH. The tract at residues 1–32 is disordered; sequence MHTTESKNEHLEDENFQTSTTPQSLIDPNNTA. Over residues 16-32 the composition is skewed to polar residues; the sequence is FQTSTTPQSLIDPNNTA. The next 13 helical transmembrane spans lie at 66 to 86, 95 to 115, 116 to 136, 152 to 172, 187 to 207, 215 to 235, 260 to 280, 284 to 304, 337 to 357, 368 to 388, 407 to 427, 431 to 451, and 472 to 492; these read VIIT…SILG, LFGL…LQLI, RIPL…GFTI, WSSI…GLGL, LAVG…HFIM, FLLG…YMMV, ILAI…GGIL, IASI…GFFV, IGLH…AGTK, IITT…GAEV, LALC…GFSF, IFIA…GPLA, and VAFL…GILG.

It belongs to the monovalent cation:proton antiporter 1 (CPA1) transporter (TC 2.A.36) family. In terms of tissue distribution, expressed only in the testis.

It localises to the cell projection. The protein resides in the cilium. It is found in the flagellum membrane. Sperm-specific Na(+)/H(+) exchanger involved in intracellular pH regulation of spermatozoa. Involved in sperm motility and fertility. The chain is Sodium/hydrogen exchanger 9B1 from Homo sapiens (Human).